The primary structure comprises 142 residues: ATP synthase epsilon chain (142 aa).

This sequence belongs to the ATPase epsilon chain family. F-type ATPases have 2 components, CF(1) - the catalytic core - and CF(0) - the membrane proton channel. CF(1) has five subunits: alpha(3), beta(3), gamma(1), delta(1), epsilon(1). CF(0) has three main subunits: a, b and c.

The protein resides in the cell inner membrane. In terms of biological role, produces ATP from ADP in the presence of a proton gradient across the membrane. The chain is ATP synthase epsilon chain from Shewanella piezotolerans (strain WP3 / JCM 13877).